We begin with the raw amino-acid sequence, 70 residues long: Conotoxin ba3a (70 aa).

A signal peptide spans 1-20 (MLKIGVMLSIILVLFPLATL). Residues 21–55 (QLVAERPAAERYAENKQDLNPDERRNYLVDLGVER) constitute a propeptide that is removed on maturation.

As to expression, expressed by the venom duct.

Its subcellular location is the secreted. This Conus bayani (Bayan's cone) protein is Conotoxin ba3a.